An 874-amino-acid chain; its full sequence is Probable inorganic carbon transporter subunit DabA (874 aa).

The Zn(2+) site is built by cysteine 398, aspartate 400, histidine 580, and cysteine 595.

The protein belongs to the inorganic carbon transporter (TC 9.A.2) DabA family. As to quaternary structure, forms a complex with DabB. Zn(2+) is required as a cofactor.

It localises to the cell membrane. In terms of biological role, part of an energy-coupled inorganic carbon pump. The sequence is that of Probable inorganic carbon transporter subunit DabA from Bacillus cereus (strain AH820).